Here is a 355-residue protein sequence, read N- to C-terminus: Double-stranded RNA-binding protein 4 (355 aa).

DRBM domains lie at 4–73 (VYKG…SLTP) and 82–150 (AYKN…SIKN). Over residues 149–188 (KNGNSNQTGSPTLPSERQEDVNSNVKSSPQEIHSQPSSKV) the composition is skewed to polar residues. The disordered stretch occupies residues 149-193 (KNGNSNQTGSPTLPSERQEDVNSNVKSSPQEIHSQPSSKVVMTPD).

In terms of assembly, heterodimer with DRB1 or DRB5. Interacts with DCL4 and cauliflower mosaic virus (CaMV) transactivator/viroplasmin protein. Interaction with CaMV transactivator/viroplasmin protein inhibits RNA silencing ability of DRB4. In terms of tissue distribution, expressed in roots, leaf vasculature, shoot apical meristem (SAM) and developing anthers.

It localises to the nucleus. Double-stranded RNA-binding protein involved in RNA-mediated post-transcriptional gene silencing (PTGS). Functions in the trans-acting small interfering RNAs (ta-siRNAs) biogenesis by binding and assisting DICER-LIKE 4 (DCL4). Required for DCL4 activity. Required for the 21 nucleotide ta-siRNAs production of the TAS3 transcript in leaves but not in flowers. Plays an important role in silencing RNA of both DNA and RNA viruses. Involved with argonaute 7 (AGO7) and RDR6 in turnip crinkle virus (TCV) silencing. May not be directly involved in viral siRNA production. May stabilize the 21 nucleotide viral siRNAs and deliver them to the RISC complex. Targeted by the viral silencing suppressor (VSR) transactivator/viroplasmin (TAV) protein of the cauliflower mosaic virus (CaMV) that inactivates DRB4 function in RNA silencing. Probably not involved in the guide strand selection from RNA duplexes. Involved in leaf morphology through its function in ta-siRNA-mediated silencing. This Arabidopsis thaliana (Mouse-ear cress) protein is Double-stranded RNA-binding protein 4 (DBR4).